Reading from the N-terminus, the 225-residue chain is Phosphoribosylformylglycinamidine synthase subunit PurQ (225 aa).

The 221-residue stretch at 5-225 (SAVITFPGSN…ESVVRGLVEA (221 aa)) folds into the Glutamine amidotransferase type-1 domain. The active-site Nucleophile is the cysteine 89. Active-site residues include histidine 197 and glutamate 199.

As to quaternary structure, part of the FGAM synthase complex composed of 1 PurL, 1 PurQ and 2 PurS subunits.

The protein resides in the cytoplasm. The enzyme catalyses N(2)-formyl-N(1)-(5-phospho-beta-D-ribosyl)glycinamide + L-glutamine + ATP + H2O = 2-formamido-N(1)-(5-O-phospho-beta-D-ribosyl)acetamidine + L-glutamate + ADP + phosphate + H(+). It carries out the reaction L-glutamine + H2O = L-glutamate + NH4(+). The protein operates within purine metabolism; IMP biosynthesis via de novo pathway; 5-amino-1-(5-phospho-D-ribosyl)imidazole from N(2)-formyl-N(1)-(5-phospho-D-ribosyl)glycinamide: step 1/2. Part of the phosphoribosylformylglycinamidine synthase complex involved in the purines biosynthetic pathway. Catalyzes the ATP-dependent conversion of formylglycinamide ribonucleotide (FGAR) and glutamine to yield formylglycinamidine ribonucleotide (FGAM) and glutamate. The FGAM synthase complex is composed of three subunits. PurQ produces an ammonia molecule by converting glutamine to glutamate. PurL transfers the ammonia molecule to FGAR to form FGAM in an ATP-dependent manner. PurS interacts with PurQ and PurL and is thought to assist in the transfer of the ammonia molecule from PurQ to PurL. This chain is Phosphoribosylformylglycinamidine synthase subunit PurQ, found in Novosphingobium aromaticivorans (strain ATCC 700278 / DSM 12444 / CCUG 56034 / CIP 105152 / NBRC 16084 / F199).